Here is a 224-residue protein sequence, read N- to C-terminus: A-type ATP synthase subunit D (224 aa).

Basic and acidic residues predominate over residues 200 to 209; the sequence is KKVKDKKEAQ. The tract at residues 200–224 is disordered; that stretch reads KKVKDKKEAQEEAADEAAAAESTGA. The segment covering 215-224 has biased composition (low complexity); sequence EAAAAESTGA.

This sequence belongs to the V-ATPase D subunit family. As to quaternary structure, has multiple subunits with at least A(3), B(3), C, D, E, F, H, I and proteolipid K(x).

Its subcellular location is the cell membrane. Component of the A-type ATP synthase that produces ATP from ADP in the presence of a proton gradient across the membrane. The polypeptide is A-type ATP synthase subunit D (Halobacterium salinarum (strain ATCC 29341 / DSM 671 / R1)).